We begin with the raw amino-acid sequence, 111 residues long: Large ribosomal subunit protein uL22 (111 aa).

This sequence belongs to the universal ribosomal protein uL22 family. In terms of assembly, part of the 50S ribosomal subunit.

Functionally, this protein binds specifically to 23S rRNA; its binding is stimulated by other ribosomal proteins, e.g. L4, L17, and L20. It is important during the early stages of 50S assembly. It makes multiple contacts with different domains of the 23S rRNA in the assembled 50S subunit and ribosome. Its function is as follows. The globular domain of the protein is located near the polypeptide exit tunnel on the outside of the subunit, while an extended beta-hairpin is found that lines the wall of the exit tunnel in the center of the 70S ribosome. The chain is Large ribosomal subunit protein uL22 from Wigglesworthia glossinidia brevipalpis.